A 95-amino-acid polypeptide reads, in one-letter code: Aspartyl/glutamyl-tRNA(Asn/Gln) amidotransferase subunit C (95 aa).

This sequence belongs to the GatC family. Heterotrimer of A, B and C subunits.

The catalysed reaction is L-glutamyl-tRNA(Gln) + L-glutamine + ATP + H2O = L-glutaminyl-tRNA(Gln) + L-glutamate + ADP + phosphate + H(+). The enzyme catalyses L-aspartyl-tRNA(Asn) + L-glutamine + ATP + H2O = L-asparaginyl-tRNA(Asn) + L-glutamate + ADP + phosphate + 2 H(+). Allows the formation of correctly charged Asn-tRNA(Asn) or Gln-tRNA(Gln) through the transamidation of misacylated Asp-tRNA(Asn) or Glu-tRNA(Gln) in organisms which lack either or both of asparaginyl-tRNA or glutaminyl-tRNA synthetases. The reaction takes place in the presence of glutamine and ATP through an activated phospho-Asp-tRNA(Asn) or phospho-Glu-tRNA(Gln). The protein is Aspartyl/glutamyl-tRNA(Asn/Gln) amidotransferase subunit C of Beijerinckia indica subsp. indica (strain ATCC 9039 / DSM 1715 / NCIMB 8712).